A 448-amino-acid polypeptide reads, in one-letter code: Carbamoyl phosphate synthase arginine-specific small chain (448 aa).

The transit peptide at 1–27 (MFKNIARLASMARSAPRTTASFQTRFM) directs the protein to the mitochondrion. One can recognise a Glutamine amidotransferase type-1 domain in the interval 224–415 (HIAVIDCGVK…LGQVHQYRAA (192 aa)). Cysteine 304 acts as the Nucleophile in catalysis. Catalysis depends on residues histidine 388 and glutamate 390.

Belongs to the CarA family. Heterodimer composed of 2 chains; the small (or glutamine) chain promotes the hydrolysis of glutamine to ammonia, which is used by the large (or ammonia) chain to synthesize carbamoyl phosphate.

It localises to the mitochondrion matrix. The catalysed reaction is hydrogencarbonate + L-glutamine + 2 ATP + H2O = carbamoyl phosphate + L-glutamate + 2 ADP + phosphate + 2 H(+). The enzyme catalyses L-glutamine + H2O = L-glutamate + NH4(+). The protein operates within amino-acid biosynthesis; L-arginine biosynthesis; carbamoyl phosphate from bicarbonate: step 1/1. In terms of biological role, small subunit of the arginine-specific carbamoyl phosphate synthase (CPSase). CPSase catalyzes the formation of carbamoyl phosphate from the ammonia moiety of glutamine, carbonate, and phosphate donated by ATP, the first step of the arginine biosynthetic pathway. The small subunit (glutamine amidotransferase) binds and cleaves glutamine to supply the large subunit with the substrate ammonia. The polypeptide is Carbamoyl phosphate synthase arginine-specific small chain (CPA1) (Yarrowia lipolytica (strain CLIB 122 / E 150) (Yeast)).